Here is a 700-residue protein sequence, read N- to C-terminus: DNA ligase 2 (700 aa).

Residues 42 to 46 and 89 to 90 contribute to the NAD(+) site; these read DDAYD and SL. The active-site N6-AMP-lysine intermediate is the Lys-122. Arg-143, Glu-177, Lys-303, and Lys-327 together coordinate NAD(+). The Zn(2+) site is built by Cys-421, Cys-424, Cys-437, and Cys-443. Positions 590–621 are disordered; it reads MTEPGATPPRPADTDGADGATAEAPGDGGPLA. Positions 615–700 constitute a BRCT domain; that stretch reads GDGGPLAGMK…FAVLVAGLLS (86 aa).

Belongs to the NAD-dependent DNA ligase family. LigA subfamily. Mg(2+) serves as cofactor. The cofactor is Mn(2+).

It catalyses the reaction NAD(+) + (deoxyribonucleotide)n-3'-hydroxyl + 5'-phospho-(deoxyribonucleotide)m = (deoxyribonucleotide)n+m + AMP + beta-nicotinamide D-nucleotide.. Its function is as follows. DNA ligase that catalyzes the formation of phosphodiester linkages between 5'-phosphoryl and 3'-hydroxyl groups in double-stranded DNA using NAD as a coenzyme and as the energy source for the reaction. It is essential for DNA replication and repair of damaged DNA. The protein is DNA ligase 2 of Streptomyces coelicolor (strain ATCC BAA-471 / A3(2) / M145).